The chain runs to 219 residues: Protein-L-isoaspartate O-methyltransferase 2 (219 aa).

The active site involves Ser60.

It belongs to the methyltransferase superfamily. L-isoaspartyl/D-aspartyl protein methyltransferase family.

The protein resides in the cytoplasm. It catalyses the reaction [protein]-L-isoaspartate + S-adenosyl-L-methionine = [protein]-L-isoaspartate alpha-methyl ester + S-adenosyl-L-homocysteine. Catalyzes the methyl esterification of L-isoaspartyl residues in peptides and proteins that result from spontaneous decomposition of normal L-aspartyl and L-asparaginyl residues. It plays a role in the repair and/or degradation of damaged proteins. The sequence is that of Protein-L-isoaspartate O-methyltransferase 2 (pcm2) from Archaeoglobus fulgidus (strain ATCC 49558 / DSM 4304 / JCM 9628 / NBRC 100126 / VC-16).